Consider the following 247-residue polypeptide: MNIIPCSIKTLKGLYDISGVEVGQHFYWQIGGFQIHAQVLITSWVVITILLGSVIIAVRNPQTIPTDGQNFFEYVLEFIRDLSKTQIGEEYGPWVPFIGTMFLFIFVSNWSGALLPWKIIQLPHGELAAPTNDINTTVALALLTSAAYFYAGLSNKGLSYFEKYIKPTPILLPINILEDFTKPLSLSFRLFGNILADELVVVVLVSLVPLVVPIPVMFLGLFTSGIQALIFATLAAAYIGESMEGHH.

The next 5 helical transmembrane spans lie at 38–58 (QVLI…IIAV), 95–115 (VPFI…GALL), 134–154 (INTT…AGLS), 199–219 (LVVV…VMFL), and 220–240 (GLFT…AYIG).

It belongs to the ATPase A chain family. As to quaternary structure, F-type ATPases have 2 components, CF(1) - the catalytic core - and CF(0) - the membrane proton channel. CF(1) has five subunits: alpha(3), beta(3), gamma(1), delta(1), epsilon(1). CF(0) has four main subunits: a, b, b' and c.

Its subcellular location is the plastid. The protein resides in the chloroplast thylakoid membrane. Functionally, key component of the proton channel; it plays a direct role in the translocation of protons across the membrane. This is ATP synthase subunit a, chloroplastic from Oryza nivara (Indian wild rice).